Consider the following 450-residue polypeptide: Probable glucoamylase (450 aa).

The first 16 residues, 1-16 (MRTYWLFLLLGGVVSA), serve as a signal peptide directing secretion. The propeptide occupies 17–28 (ESLLSPNKRSKE). Trp-147 serves as a coordination point for substrate. Catalysis depends on Asp-203, which acts as the Proton acceptor. The active-site Proton donor is Glu-206. N-linked (GlcNAc...) asparagine glycosylation is found at Asn-383 and Asn-409.

It belongs to the glycosyl hydrolase 15 family.

The catalysed reaction is Hydrolysis of terminal (1-&gt;4)-linked alpha-D-glucose residues successively from non-reducing ends of the chains with release of beta-D-glucose.. In Schizosaccharomyces pombe (strain 972 / ATCC 24843) (Fission yeast), this protein is Probable glucoamylase (meu17).